The sequence spans 111 residues: UPF0060 membrane protein Cbei_2176 (111 aa).

4 helical membrane passes run 7 to 27, 33 to 53, 60 to 80, and 85 to 105; these read ILYF…IWIW, SYLY…IPTL, FGKV…LWGW, and IVPD…VIVI.

The protein belongs to the UPF0060 family.

It is found in the cell membrane. This Clostridium beijerinckii (strain ATCC 51743 / NCIMB 8052) (Clostridium acetobutylicum) protein is UPF0060 membrane protein Cbei_2176.